Consider the following 155-residue polypeptide: 17.6 kDa class I heat shock protein 1 (155 aa).

Residues Ser39–Ser154 enclose the sHSP domain.

The protein belongs to the small heat shock protein (HSP20) family. Forms oligomeric structures. Binds to AKR2A.

It localises to the cytoplasm. Functionally, possesses chaperone activity. This is 17.6 kDa class I heat shock protein 1 (HSP17.6A) from Arabidopsis thaliana (Mouse-ear cress).